The sequence spans 152 residues: Nucleoside diphosphate kinase (152 aa).

Positions 11, 59, 87, 93, 104, and 114 each coordinate ATP. The active-site Pros-phosphohistidine intermediate is the histidine 117.

This sequence belongs to the NDK family. In terms of assembly, homotetramer. It depends on Mg(2+) as a cofactor.

Its subcellular location is the cytoplasm. The enzyme catalyses a 2'-deoxyribonucleoside 5'-diphosphate + ATP = a 2'-deoxyribonucleoside 5'-triphosphate + ADP. It catalyses the reaction a ribonucleoside 5'-diphosphate + ATP = a ribonucleoside 5'-triphosphate + ADP. Functionally, major role in the synthesis of nucleoside triphosphates other than ATP. The ATP gamma phosphate is transferred to the NDP beta phosphate via a ping-pong mechanism, using a phosphorylated active-site intermediate. This Prochlorococcus marinus (strain MIT 9313) protein is Nucleoside diphosphate kinase.